Consider the following 262-residue polypeptide: Type III pantothenate kinase (262 aa).

6–13 serves as a coordination point for ATP; it reads DVGNTNAV. Substrate is bound by residues Tyr-100 and 107 to 110; that span reads GADR. Asp-109 acts as the Proton acceptor in catalysis. Asp-129 lines the K(+) pocket. Thr-132 is an ATP binding site. Residue Thr-184 participates in substrate binding.

Belongs to the type III pantothenate kinase family. Homodimer. NH4(+) is required as a cofactor. The cofactor is K(+).

The protein resides in the cytoplasm. The catalysed reaction is (R)-pantothenate + ATP = (R)-4'-phosphopantothenate + ADP + H(+). Its pathway is cofactor biosynthesis; coenzyme A biosynthesis; CoA from (R)-pantothenate: step 1/5. Its function is as follows. Catalyzes the phosphorylation of pantothenate (Pan), the first step in CoA biosynthesis. The chain is Type III pantothenate kinase from Bacillus cereus (strain B4264).